We begin with the raw amino-acid sequence, 287 residues long: Lys-63-specific deubiquitinase (287 aa).

In terms of domain architecture, MPN spans 33-176 (VHLESDAFLV…YTCFQSVQAQ (144 aa)). Positions 119, 121, and 132 each coordinate Zn(2+). Residues 119-132 (HSHPHITVWPSHVD) carry the JAMM motif motif. Positions 256-283 (LQWLEDRLEQNKQSIITLQKEKELLTQE) form a coiled coil.

It belongs to the peptidase M67A family. BRCC36 subfamily. As to quaternary structure, monomer. Homodimer. Component of the BRISC complex, at least composed of abraxas2, brcc3, babam1 and babam2. Interacts with abraxas2; the interaction is direct and may form a heterotetramer. Component of the BRCA1-A complex. Both the BRCA1-A complex and the BRISC complex bind polyubiquitin. Zn(2+) serves as cofactor.

It is found in the nucleus. Its subcellular location is the cytoplasm. The protein resides in the cytoskeleton. The protein localises to the spindle pole. Functionally, metalloprotease that specifically cleaves 'Lys-63'-linked polyubiquitin chains, leaving the last ubiquitin chain attached to its substrates. Catalytic subunit of the BRISC complex, a multiprotein complex that specifically cleaves 'Lys-63'-linked ubiquitin in various substrates; brcc3 does not have activity by itself, but needs to be associated into a higher-order assembly, for minimal in vitro activity. The polypeptide is Lys-63-specific deubiquitinase (Danio rerio (Zebrafish)).